A 429-amino-acid polypeptide reads, in one-letter code: MREALNQGLIDFLKASPTPFHATAALAQRLEAAGYQRLDERETWTTEPNGRYYVTRNDSSIIAFKLGRHSPLQGGIRLVGAHTDSPCLRVKPQPELQRQGFWQLGVEVYGGALLAPWFDRDLSLAGRVTFRRDGKVESQLIDFKLPIAIIPNLAIHLNREANQGWAINAQTELPPILAQFAGDERVDFRAVLTDQLAREHGLNADVVLDYELSFYDTQSAAVIGLNGDFIAGARLDNLLSCYAGLQALLTSETDETCVLVCNDHEEVGSCSACGADGPMLEQTLRRLLPEGDEFVRTIQKSLLVSADNAHGVHPNYAEKHDANHGPKLNAGPVIKVNSNQRYATNSETAGFFRHLCMAQEVPVQSFVVRSDMGCGSTIGPITASHLGVRTVDIGLPTFAMHSIRELCGSHDLAHLVKVLGAFYASHDLP.

Zn(2+) contacts are provided by histidine 82, histidine 156, and histidine 401.

Belongs to the peptidase M18 family. Requires Zn(2+) as cofactor.

In Pseudomonas fluorescens (strain SBW25), this protein is Probable M18 family aminopeptidase 2.